Here is a 134-residue protein sequence, read N- to C-terminus: Small ribosomal subunit protein uS9 (134 aa).

Positions 109–134 are disordered; it reads DARRTEPHKPSKSSKGPRAKRQKSYR. The span at 118-134 shows a compositional bias: basic residues; sequence PSKSSKGPRAKRQKSYR.

This sequence belongs to the universal ribosomal protein uS9 family.

The polypeptide is Small ribosomal subunit protein uS9 (Methanococcus maripaludis (strain C7 / ATCC BAA-1331)).